The sequence spans 275 residues: MAIIKCKPTSAGRRHVVKVVNTDLHKGKPFAGLLAKKSKSGGRNNTGRITVRHVGGGHKQHYRIIDFKRIKDGIPAKVERLEYDPNRTANIALVLYADGERRYILAAKGMQAGDKIQSGIDAEIKVGNALPLRNIPVGSVVHAVEMKPGKGAQIARSAGTYVQVVARDGEYATLRLRSGEMRKVPVDCRATMGEVGNAEHMLRQLGKAGAKRWRGVRPTVRGVAMNPIDHPHGGGEGRTSGGRHPVSPWGVPTKGYKTRSNKRTDKYIVRRRNKK.

A disordered region spans residues V223–K275.

Belongs to the universal ribosomal protein uL2 family. Part of the 50S ribosomal subunit. Forms a bridge to the 30S subunit in the 70S ribosome.

In terms of biological role, one of the primary rRNA binding proteins. Required for association of the 30S and 50S subunits to form the 70S ribosome, for tRNA binding and peptide bond formation. It has been suggested to have peptidyltransferase activity; this is somewhat controversial. Makes several contacts with the 16S rRNA in the 70S ribosome. This Shewanella woodyi (strain ATCC 51908 / MS32) protein is Large ribosomal subunit protein uL2.